Here is a 404-residue protein sequence, read N- to C-terminus: Phosphopentomutase (404 aa).

The Mn(2+) site is built by Asp-10, Asp-303, His-308, Asp-344, His-345, and His-356.

This sequence belongs to the phosphopentomutase family. Mn(2+) is required as a cofactor.

It localises to the cytoplasm. It catalyses the reaction 2-deoxy-alpha-D-ribose 1-phosphate = 2-deoxy-D-ribose 5-phosphate. It carries out the reaction alpha-D-ribose 1-phosphate = D-ribose 5-phosphate. The protein operates within carbohydrate degradation; 2-deoxy-D-ribose 1-phosphate degradation; D-glyceraldehyde 3-phosphate and acetaldehyde from 2-deoxy-alpha-D-ribose 1-phosphate: step 1/2. Functionally, isomerase that catalyzes the conversion of deoxy-ribose 1-phosphate (dRib-1-P) and ribose 1-phosphate (Rib-1-P) to deoxy-ribose 5-phosphate (dRib-5-P) and ribose 5-phosphate (Rib-5-P), respectively. The sequence is that of Phosphopentomutase from Shewanella sp. (strain MR-7).